The primary structure comprises 95 residues: Integration host factor subunit beta (95 aa).

This sequence belongs to the bacterial histone-like protein family. As to quaternary structure, heterodimer of an alpha and a beta chain.

Functionally, this protein is one of the two subunits of integration host factor, a specific DNA-binding protein that functions in genetic recombination as well as in transcriptional and translational control. In Shewanella sp. (strain ANA-3), this protein is Integration host factor subunit beta.